We begin with the raw amino-acid sequence, 428 residues long: Arginine biosynthesis bifunctional protein ArgJ, mitochondrial (428 aa).

Substrate contacts are provided by Thr-171, Lys-197, Thr-208, Glu-294, Asn-423, and Ser-428. The Nucleophile role is filled by Thr-208.

It belongs to the ArgJ family. Heterodimer of an alpha and a beta chain. In terms of processing, the alpha and beta chains are autoproteolytically processed from a single precursor protein within the mitochondrion.

Its subcellular location is the mitochondrion matrix. It catalyses the reaction N(2)-acetyl-L-ornithine + L-glutamate = N-acetyl-L-glutamate + L-ornithine. The catalysed reaction is L-glutamate + acetyl-CoA = N-acetyl-L-glutamate + CoA + H(+). The protein operates within amino-acid biosynthesis; L-arginine biosynthesis; L-ornithine and N-acetyl-L-glutamate from L-glutamate and N(2)-acetyl-L-ornithine (cyclic): step 1/1. It participates in amino-acid biosynthesis; L-arginine biosynthesis; N(2)-acetyl-L-ornithine from L-glutamate: step 1/4. Its function is as follows. Catalyzes two activities which are involved in the cyclic version of arginine biosynthesis: the synthesis of acetylglutamate from glutamate and acetyl-CoA, and of ornithine by transacetylation between acetylornithine and glutamate. This chain is Arginine biosynthesis bifunctional protein ArgJ, mitochondrial, found in Komagataella phaffii (strain GS115 / ATCC 20864) (Yeast).